The chain runs to 540 residues: ADP,ATP carrier protein 2 (540 aa).

Helical transmembrane passes span 23–43 (FSKFIPLFFLAFFVGVNYALL), 61–81 (VIPFLKVWGIVPGAVIVTMIY), 93–113 (VFISLVGGFLGFFALFATVIY), 150–170 (LYYVMSELWSSIVLSTLFWGV), 185–205 (ALINTGLNLSSVFAGEVSLWL), 222–242 (EVLLNITLLIVLAGGVILYLY), 292–312 (LLGIAVVVLSYNLVIHLFEVV), 334–354 (ITTLTGIVSALTGIFAAGQTI), 361–381 (IGALVPPLTMLITGALFFGAI), 389–409 (MIFGGILGISPLVLTAWLGGV), 455–475 (SGGSLVYQGLLIIFSSVAASL), and 477–497 (AITIVLLLALGSWIFVIAWLG).

Belongs to the ADP/ATP translocase tlc family.

It is found in the cell membrane. This Chlamydia trachomatis serovar D (strain ATCC VR-885 / DSM 19411 / UW-3/Cx) protein is ADP,ATP carrier protein 2 (tlcB).